We begin with the raw amino-acid sequence, 372 residues long: Aminomethyltransferase (372 aa).

The protein belongs to the GcvT family. In terms of assembly, the glycine cleavage system is composed of four proteins: P, T, L and H.

It catalyses the reaction N(6)-[(R)-S(8)-aminomethyldihydrolipoyl]-L-lysyl-[protein] + (6S)-5,6,7,8-tetrahydrofolate = N(6)-[(R)-dihydrolipoyl]-L-lysyl-[protein] + (6R)-5,10-methylene-5,6,7,8-tetrahydrofolate + NH4(+). The glycine cleavage system catalyzes the degradation of glycine. This is Aminomethyltransferase from Synechococcus elongatus (strain ATCC 33912 / PCC 7942 / FACHB-805) (Anacystis nidulans R2).